The primary structure comprises 428 residues: Aspartate--tRNA(Asp) ligase (428 aa).

L-aspartate is bound at residue glutamate 170. Residues glutamine 192–lysine 195 are aspartate. Position 213 (arginine 213) interacts with L-aspartate. Residues arginine 213–glutamate 215 and glutamate 351 contribute to the ATP site. The Mg(2+) site is built by glutamate 351 and serine 354. Residues serine 354 and arginine 358 each coordinate L-aspartate. Position 399–402 (glycine 399–arginine 402) interacts with ATP.

It belongs to the class-II aminoacyl-tRNA synthetase family. Type 2 subfamily. In terms of assembly, homodimer. Requires Mg(2+) as cofactor.

The protein resides in the cytoplasm. The enzyme catalyses tRNA(Asp) + L-aspartate + ATP = L-aspartyl-tRNA(Asp) + AMP + diphosphate. Functionally, catalyzes the attachment of L-aspartate to tRNA(Asp) in a two-step reaction: L-aspartate is first activated by ATP to form Asp-AMP and then transferred to the acceptor end of tRNA(Asp). This chain is Aspartate--tRNA(Asp) ligase, found in Pyrobaculum aerophilum (strain ATCC 51768 / DSM 7523 / JCM 9630 / CIP 104966 / NBRC 100827 / IM2).